A 490-amino-acid chain; its full sequence is UDP-N-acetylmuramate--L-alanine ligase (490 aa).

126 to 132 serves as a coordination point for ATP; the sequence is GTHGKTT.

This sequence belongs to the MurCDEF family.

Its subcellular location is the cytoplasm. The enzyme catalyses UDP-N-acetyl-alpha-D-muramate + L-alanine + ATP = UDP-N-acetyl-alpha-D-muramoyl-L-alanine + ADP + phosphate + H(+). The protein operates within cell wall biogenesis; peptidoglycan biosynthesis. Functionally, cell wall formation. This is UDP-N-acetylmuramate--L-alanine ligase from Baumannia cicadellinicola subsp. Homalodisca coagulata.